Consider the following 329-residue polypeptide: Ketol-acid reductoisomerase (NADP(+)) (329 aa).

Residues 1–181 (MKVYYEQDAN…GGTRSGVIET (181 aa)) form the KARI N-terminal Rossmann domain. Residues 24-27 (YGSQ), Arg-47, and 82-85 (DQYQ) each bind NADP(+). The active site involves His-107. Gly-133 is a binding site for NADP(+). The region spanning 182-327 (TFREETETDL…ARLRSMMPWL (146 aa)) is the KARI C-terminal knotted domain. 4 residues coordinate Mg(2+): Asp-190, Glu-194, Glu-226, and Glu-230. Ser-251 is a binding site for substrate.

It belongs to the ketol-acid reductoisomerase family. It depends on Mg(2+) as a cofactor.

It catalyses the reaction (2R)-2,3-dihydroxy-3-methylbutanoate + NADP(+) = (2S)-2-acetolactate + NADPH + H(+). The catalysed reaction is (2R,3R)-2,3-dihydroxy-3-methylpentanoate + NADP(+) = (S)-2-ethyl-2-hydroxy-3-oxobutanoate + NADPH + H(+). It functions in the pathway amino-acid biosynthesis; L-isoleucine biosynthesis; L-isoleucine from 2-oxobutanoate: step 2/4. It participates in amino-acid biosynthesis; L-valine biosynthesis; L-valine from pyruvate: step 2/4. In terms of biological role, involved in the biosynthesis of branched-chain amino acids (BCAA). Catalyzes an alkyl-migration followed by a ketol-acid reduction of (S)-2-acetolactate (S2AL) to yield (R)-2,3-dihydroxy-isovalerate. In the isomerase reaction, S2AL is rearranged via a Mg-dependent methyl migration to produce 3-hydroxy-3-methyl-2-ketobutyrate (HMKB). In the reductase reaction, this 2-ketoacid undergoes a metal-dependent reduction by NADPH to yield (R)-2,3-dihydroxy-isovalerate. The protein is Ketol-acid reductoisomerase (NADP(+)) of Oleidesulfovibrio alaskensis (strain ATCC BAA-1058 / DSM 17464 / G20) (Desulfovibrio alaskensis).